Consider the following 170-residue polypeptide: Adenine phosphoribosyltransferase (170 aa).

It belongs to the purine/pyrimidine phosphoribosyltransferase family. As to quaternary structure, homodimer.

Its subcellular location is the cytoplasm. The catalysed reaction is AMP + diphosphate = 5-phospho-alpha-D-ribose 1-diphosphate + adenine. The protein operates within purine metabolism; AMP biosynthesis via salvage pathway; AMP from adenine: step 1/1. In terms of biological role, catalyzes a salvage reaction resulting in the formation of AMP, that is energically less costly than de novo synthesis. This is Adenine phosphoribosyltransferase from Kosmotoga olearia (strain ATCC BAA-1733 / DSM 21960 / TBF 19.5.1).